Reading from the N-terminus, the 681-residue chain is Sodium-dependent phosphate transporter 1 (681 aa).

The next 6 helical transmembrane spans lie at 25-45 (NLWM…SVGA), 66-86 (ACIL…AKVS), 106-126 (LMAG…VASF), 162-182 (IVMS…ILFF), 201-221 (ALPI…MYTG), and 234-254 (GTIL…WFFV). The tract at residues 266–295 (VKSSPSESPLMEKKNNLKDHEETKMAPGDV) is disordered. Phosphoserine occurs at positions 269 and 273. Residues 275–289 (LMEKKNNLKDHEETK) are compositionally biased toward basic and acidic residues. The next 4 membrane-spanning stretches (helical) occupy residues 513 to 533 (VSLL…FAHG), 561 to 581 (ATPI…LWVW), 602 to 622 (FSIE…GLPI), and 652 to 672 (IFMA…AIMA).

This sequence belongs to the inorganic phosphate transporter (PiT) (TC 2.A.20) family. As to expression, ubiquitously expressed.

Its subcellular location is the cell membrane. The enzyme catalyses 2 Na(+)(out) + phosphate(out) = 2 Na(+)(in) + phosphate(in). Its function is as follows. Sodium-phosphate symporter which preferentially transports the monovalent form of phosphate with a stoichiometry of two sodium ions per phosphate ion. May play a role in extracellular matrix and cartilage calcification as well as in vascular calcification. Essential for cell proliferation but this function is independent of its phosphate transporter activity. The polypeptide is Sodium-dependent phosphate transporter 1 (Slc20a1) (Rattus norvegicus (Rat)).